A 121-amino-acid chain; its full sequence is DNA-directed RNA polymerase subunit omega (121 aa).

It belongs to the RNA polymerase subunit omega family. As to quaternary structure, the RNAP catalytic core consists of 2 alpha, 1 beta, 1 beta' and 1 omega subunit. When a sigma factor is associated with the core the holoenzyme is formed, which can initiate transcription.

It catalyses the reaction RNA(n) + a ribonucleoside 5'-triphosphate = RNA(n+1) + diphosphate. In terms of biological role, promotes RNA polymerase assembly. Latches the N- and C-terminal regions of the beta' subunit thereby facilitating its interaction with the beta and alpha subunits. This Syntrophobacter fumaroxidans (strain DSM 10017 / MPOB) protein is DNA-directed RNA polymerase subunit omega.